The following is a 104-amino-acid chain: Large ribosomal subunit protein uL24 (104 aa).

This sequence belongs to the universal ribosomal protein uL24 family. In terms of assembly, part of the 50S ribosomal subunit.

One of two assembly initiator proteins, it binds directly to the 5'-end of the 23S rRNA, where it nucleates assembly of the 50S subunit. In terms of biological role, one of the proteins that surrounds the polypeptide exit tunnel on the outside of the subunit. This Shewanella oneidensis (strain ATCC 700550 / JCM 31522 / CIP 106686 / LMG 19005 / NCIMB 14063 / MR-1) protein is Large ribosomal subunit protein uL24.